The chain runs to 215 residues: Ribosomal RNA small subunit methyltransferase G (215 aa).

S-adenosyl-L-methionine is bound by residues glycine 73, leucine 78, 125-126, and arginine 140; that span reads AE.

This sequence belongs to the methyltransferase superfamily. RNA methyltransferase RsmG family.

It is found in the cytoplasm. Functionally, specifically methylates the N7 position of guanine in position 518 of 16S rRNA. This Renibacterium salmoninarum (strain ATCC 33209 / DSM 20767 / JCM 11484 / NBRC 15589 / NCIMB 2235) protein is Ribosomal RNA small subunit methyltransferase G.